Here is a 517-residue protein sequence, read N- to C-terminus: Ribonuclease Y (517 aa).

The chain crosses the membrane as a helical span at residues 1-21 (MIEVLIGLGAGVVGVGAGYLY). Positions 207 to 273 (LINVVNIKND…TRVIELLVED (67 aa)) constitute a KH domain. The HD domain occupies 333–426 (ALAHSLEVAH…VCAADALSAA (94 aa)).

It belongs to the RNase Y family.

It is found in the cell membrane. In terms of biological role, endoribonuclease that initiates mRNA decay. The protein is Ribonuclease Y of Campylobacter concisus (strain 13826).